Here is a 382-residue protein sequence, read N- to C-terminus: Dual-specificity RNA methyltransferase RlmN (382 aa).

Glutamate 95 (proton acceptor) is an active-site residue. Residues 101 to 348 (EDDRGTLCIS…TTVRKTRGDD (248 aa)) form the Radical SAM core domain. A disulfide bridge connects residues cysteine 108 and cysteine 353. [4Fe-4S] cluster is bound by residues cysteine 115, cysteine 119, and cysteine 122. Residues 179 to 180 (GE), serine 211, 233 to 235 (SLH), and asparagine 310 each bind S-adenosyl-L-methionine. Residue cysteine 353 is the S-methylcysteine intermediate of the active site.

Belongs to the radical SAM superfamily. RlmN family. The cofactor is [4Fe-4S] cluster.

It localises to the cytoplasm. It carries out the reaction adenosine(2503) in 23S rRNA + 2 reduced [2Fe-2S]-[ferredoxin] + 2 S-adenosyl-L-methionine = 2-methyladenosine(2503) in 23S rRNA + 5'-deoxyadenosine + L-methionine + 2 oxidized [2Fe-2S]-[ferredoxin] + S-adenosyl-L-homocysteine. The enzyme catalyses adenosine(37) in tRNA + 2 reduced [2Fe-2S]-[ferredoxin] + 2 S-adenosyl-L-methionine = 2-methyladenosine(37) in tRNA + 5'-deoxyadenosine + L-methionine + 2 oxidized [2Fe-2S]-[ferredoxin] + S-adenosyl-L-homocysteine. In terms of biological role, specifically methylates position 2 of adenine 2503 in 23S rRNA and position 2 of adenine 37 in tRNAs. m2A2503 modification seems to play a crucial role in the proofreading step occurring at the peptidyl transferase center and thus would serve to optimize ribosomal fidelity. The polypeptide is Dual-specificity RNA methyltransferase RlmN (Bordetella pertussis (strain Tohama I / ATCC BAA-589 / NCTC 13251)).